The primary structure comprises 484 residues: Calcium-dependent protein kinase 26 (484 aa).

The region spanning 24–282 (YSLGHKLGQG…AHQVLRHPWI (259 aa)) is the Protein kinase domain. Residues 30–38 (LGQGQFGTT) and Lys53 contribute to the ATP site. Residue Asp148 is the Proton acceptor of the active site. Ser188 carries the post-translational modification Phosphoserine. Residues 288–318 (APDRALDPAVLSRLKQFSAMNKLKQMALRVI) are autoinhibitory domain. EF-hand domains are found at residues 325–360 (EEIAGLKEMFKAMDTDNSGAITFDELKAGLRRYGST), 361–396 (LKDTEIRDLMEAADIDKSGTIDYGEFIAATIHLNKL), 397–432 (EREEHLLSAFRYFDKDGSGYITIDELQHACAEQGMS), and 436–466 (LEDVIKEVDQDNDGRIDYGEFVAMMQKGIVG). 19 residues coordinate Ca(2+): Asp338, Asp340, Ser342, Glu349, Asp374, Asp376, Ser378, Thr380, Glu385, Asp410, Asp412, Ser414, Tyr416, Glu421, Asp444, Asp446, Asp448, Arg450, and Glu455.

It belongs to the protein kinase superfamily. Ser/Thr protein kinase family. CDPK subfamily.

It catalyses the reaction L-seryl-[protein] + ATP = O-phospho-L-seryl-[protein] + ADP + H(+). The enzyme catalyses L-threonyl-[protein] + ATP = O-phospho-L-threonyl-[protein] + ADP + H(+). With respect to regulation, activated by calcium. Autophosphorylation may play an important role in the regulation of the kinase activity. Its function is as follows. May play a role in signal transduction pathways that involve calcium as a second messenger. This chain is Calcium-dependent protein kinase 26 (CPK26), found in Arabidopsis thaliana (Mouse-ear cress).